The following is a 358-amino-acid chain: MATDDDRFPWDQDSILSRDLLSASSMQLCYEKLNRSCVRSPYSPGPRLILYAVFGFGAVLAVCGNLLVMTSILHFRQLHSPANFLVASLACADFLVGLTVMPFSMVRSVEGCWYFGDIYCKFHSSFDGSFCYSSIFHLCFISADRYIAVSDPLIYPTRFTASVSGKCITFSWLLSIIYSFSLFYTGVNEAGLEDLVSALTCVGGCQIAVNQSWVFINFLLFLVPALVMMTVYSKIFLIAKQQAQNIEKMGKQTARASESYKDRVAKRERKAAKTLGIAVAAFLLSWLPYFIDSIIDAFLGFVTPTYVYEILVWIGYYNSAMNPLIYAFFYPWFRKAIKLIVTGKILRENSSATNLFPE.

At 1–47 (MATDDDRFPWDQDSILSRDLLSASSMQLCYEKLNRSCVRSPYSPGPR) the chain is on the extracellular side. The N-linked (GlcNAc...) asparagine glycan is linked to asparagine 34. 2 disulfide bridges follow: cysteine 37/cysteine 201 and cysteine 120/cysteine 205. Residues 48 to 68 (LILYAVFGFGAVLAVCGNLLV) traverse the membrane as a helical segment. The Cytoplasmic portion of the chain corresponds to 69 to 83 (MTSILHFRQLHSPAN). A helical membrane pass occupies residues 84–104 (FLVASLACADFLVGLTVMPFS). Over 105–125 (MVRSVEGCWYFGDIYCKFHSS) the chain is Extracellular. The helical transmembrane segment at 126 to 147 (FDGSFCYSSIFHLCFISADRYI) threads the bilayer. At 148–166 (AVSDPLIYPTRFTASVSGK) the chain is on the cytoplasmic side. A helical membrane pass occupies residues 167-187 (CITFSWLLSIIYSFSLFYTGV). The Extracellular portion of the chain corresponds to 188–211 (NEAGLEDLVSALTCVGGCQIAVNQ). N-linked (GlcNAc...) asparagine glycosylation is present at asparagine 210. The helical transmembrane segment at 212 to 232 (SWVFINFLLFLVPALVMMTVY) threads the bilayer. Over 233–274 (SKIFLIAKQQAQNIEKMGKQTARASESYKDRVAKRERKAAKT) the chain is Cytoplasmic. Residues 275–295 (LGIAVAAFLLSWLPYFIDSII) traverse the membrane as a helical segment. At 296–309 (DAFLGFVTPTYVYE) the chain is on the extracellular side. Residues 310-332 (ILVWIGYYNSAMNPLIYAFFYPW) form a helical membrane-spanning segment. At 333-358 (FRKAIKLIVTGKILRENSSATNLFPE) the chain is on the cytoplasmic side.

The protein belongs to the G-protein coupled receptor 1 family.

The protein localises to the cell membrane. Its function is as follows. Olfactory receptor specific for N,N-dimethylalkylamines trace amines, such as N,N-dimethylcyclohexylamine. Trace amine compounds are enriched in animal body fluids and act on trace amine-associated receptors (TAARs) to elicit both intraspecific and interspecific innate behaviors. Ligand-binding causes a conformation change that triggers signaling via G(s)-class of G alpha proteins (GNAL or GNAS). The sequence is that of Trace amine-associated receptor 7b from Rattus norvegicus (Rat).